The sequence spans 275 residues: Large ribosomal subunit protein uL2 (275 aa).

Disordered regions lie at residues 36-55 (KQSK…RHQG) and 223-275 (VAMN…RHKR). Positions 39–48 (KNAGRNNSGR) are enriched in polar residues. Basic and acidic residues predominate over residues 229–239 (DHPHGGGEGRT).

It belongs to the universal ribosomal protein uL2 family. As to quaternary structure, part of the 50S ribosomal subunit. Forms a bridge to the 30S subunit in the 70S ribosome.

In terms of biological role, one of the primary rRNA binding proteins. Required for association of the 30S and 50S subunits to form the 70S ribosome, for tRNA binding and peptide bond formation. It has been suggested to have peptidyltransferase activity; this is somewhat controversial. Makes several contacts with the 16S rRNA in the 70S ribosome. The chain is Large ribosomal subunit protein uL2 from Aromatoleum aromaticum (strain DSM 19018 / LMG 30748 / EbN1) (Azoarcus sp. (strain EbN1)).